Here is a 396-residue protein sequence, read N- to C-terminus: NADH-quinone oxidoreductase subunit D (396 aa).

Belongs to the complex I 49 kDa subunit family. As to quaternary structure, NDH-1 is composed of 14 different subunits. Subunits NuoB, C, D, E, F, and G constitute the peripheral sector of the complex.

The protein resides in the cell inner membrane. The catalysed reaction is a quinone + NADH + 5 H(+)(in) = a quinol + NAD(+) + 4 H(+)(out). Functionally, NDH-1 shuttles electrons from NADH, via FMN and iron-sulfur (Fe-S) centers, to quinones in the respiratory chain. The immediate electron acceptor for the enzyme in this species is believed to be ubiquinone. Couples the redox reaction to proton translocation (for every two electrons transferred, four hydrogen ions are translocated across the cytoplasmic membrane), and thus conserves the redox energy in a proton gradient. The polypeptide is NADH-quinone oxidoreductase subunit D (Bartonella henselae (strain ATCC 49882 / DSM 28221 / CCUG 30454 / Houston 1) (Rochalimaea henselae)).